Consider the following 483-residue polypeptide: Glutamyl-tRNA(Gln) amidotransferase subunit A (483 aa).

Catalysis depends on charge relay system residues Lys76 and Ser151. Ser175 functions as the Acyl-ester intermediate in the catalytic mechanism.

It belongs to the amidase family. GatA subfamily. Heterotrimer of A, B and C subunits.

The enzyme catalyses L-glutamyl-tRNA(Gln) + L-glutamine + ATP + H2O = L-glutaminyl-tRNA(Gln) + L-glutamate + ADP + phosphate + H(+). Functionally, allows the formation of correctly charged Gln-tRNA(Gln) through the transamidation of misacylated Glu-tRNA(Gln) in organisms which lack glutaminyl-tRNA synthetase. The reaction takes place in the presence of glutamine and ATP through an activated gamma-phospho-Glu-tRNA(Gln). This is Glutamyl-tRNA(Gln) amidotransferase subunit A from Pseudomonas putida (strain ATCC 700007 / DSM 6899 / JCM 31910 / BCRC 17059 / LMG 24140 / F1).